Reading from the N-terminus, the 39-residue chain is MASTGRIPLWIIATFGGIAALTVVGLFIYGSYSGIGSAL.

A helical transmembrane segment spans residues 9 to 29; the sequence is LWIIATFGGIAALTVVGLFIY.

The protein belongs to the PsbJ family. In terms of assembly, PSII is composed of 1 copy each of membrane proteins PsbA, PsbB, PsbC, PsbD, PsbE, PsbF, PsbH, PsbI, PsbJ, PsbK, PsbL, PsbM, PsbT, PsbX, PsbY, PsbZ, Psb30/Ycf12, at least 3 peripheral proteins of the oxygen-evolving complex and a large number of cofactors. It forms dimeric complexes.

The protein localises to the plastid. It is found in the chloroplast thylakoid membrane. In terms of biological role, one of the components of the core complex of photosystem II (PSII). PSII is a light-driven water:plastoquinone oxidoreductase that uses light energy to abstract electrons from H(2)O, generating O(2) and a proton gradient subsequently used for ATP formation. It consists of a core antenna complex that captures photons, and an electron transfer chain that converts photonic excitation into a charge separation. The protein is Photosystem II reaction center protein J of Guillardia theta (Cryptophyte).